The primary structure comprises 430 residues: Tol-Pal system protein TolB (430 aa).

The N-terminal stretch at 1 to 21 (MKQALRVAFGFLILWASVLHA) is a signal peptide.

It belongs to the TolB family. As to quaternary structure, the Tol-Pal system is composed of five core proteins: the inner membrane proteins TolA, TolQ and TolR, the periplasmic protein TolB and the outer membrane protein Pal. They form a network linking the inner and outer membranes and the peptidoglycan layer.

The protein localises to the periplasm. Functionally, part of the Tol-Pal system, which plays a role in outer membrane invagination during cell division and is important for maintaining outer membrane integrity. TolB occupies a key intermediary position in the Tol-Pal system because it communicates directly with both membrane-embedded components, Pal in the outer membrane and TolA in the inner membrane. This Shigella boydii serotype 18 (strain CDC 3083-94 / BS512) protein is Tol-Pal system protein TolB.